We begin with the raw amino-acid sequence, 868 residues long: Translation initiation factor IF-2 (868 aa).

A compositionally biased stretch (basic and acidic residues) spans 103–183; the sequence is RSELPETSDR…RQAAAERETV (81 aa). Residues 103–274 form a disordered region; sequence RSELPETSDR…GRPMLMPEQK (172 aa). Residues 190 to 207 show a composition bias toward pro residues; the sequence is VAAPPIPRPAPEPRPPAR. Positions 213–254 are enriched in basic and acidic residues; that stretch reads PKAEAPRAHPAERETEARGDKRSAGLSRKDEYRELQGDDFRK. The segment covering 255 to 264 has biased composition (basic residues); it reads GGGKRKKPKT. One can recognise a tr-type G domain in the interval 369–538; it reads PRPPVVTIMG…LVQAEVLELK (170 aa). Positions 378-385 are G1; that stretch reads GHVDHGKT. GTP is bound at residue 378–385; it reads GHVDHGKT. The G2 stretch occupies residues 403-407; sequence GITQH. The interval 424-427 is G3; the sequence is DTPG. Residues 424–428 and 478–481 each bind GTP; these read DTPGH and NKMD. The segment at 478–481 is G4; it reads NKMD. Positions 514-516 are G5; it reads SAK.

This sequence belongs to the TRAFAC class translation factor GTPase superfamily. Classic translation factor GTPase family. IF-2 subfamily.

The protein localises to the cytoplasm. In terms of biological role, one of the essential components for the initiation of protein synthesis. Protects formylmethionyl-tRNA from spontaneous hydrolysis and promotes its binding to the 30S ribosomal subunits. Also involved in the hydrolysis of GTP during the formation of the 70S ribosomal complex. The sequence is that of Translation initiation factor IF-2 from Methylococcus capsulatus (strain ATCC 33009 / NCIMB 11132 / Bath).